The chain runs to 309 residues: Probable 5-dehydro-4-deoxyglucarate dehydratase (309 aa).

The protein belongs to the DapA family.

The enzyme catalyses 5-dehydro-4-deoxy-D-glucarate + H(+) = 2,5-dioxopentanoate + CO2 + H2O. The protein operates within carbohydrate acid metabolism; D-glucarate degradation; 2,5-dioxopentanoate from D-glucarate: step 2/2. The chain is Probable 5-dehydro-4-deoxyglucarate dehydratase from Saccharopolyspora erythraea (strain ATCC 11635 / DSM 40517 / JCM 4748 / NBRC 13426 / NCIMB 8594 / NRRL 2338).